Consider the following 204-residue polypeptide: Leucyl/phenylalanyl-tRNA--protein transferase (204 aa).

Belongs to the L/F-transferase family.

It localises to the cytoplasm. It catalyses the reaction N-terminal L-lysyl-[protein] + L-leucyl-tRNA(Leu) = N-terminal L-leucyl-L-lysyl-[protein] + tRNA(Leu) + H(+). The enzyme catalyses N-terminal L-arginyl-[protein] + L-leucyl-tRNA(Leu) = N-terminal L-leucyl-L-arginyl-[protein] + tRNA(Leu) + H(+). It carries out the reaction L-phenylalanyl-tRNA(Phe) + an N-terminal L-alpha-aminoacyl-[protein] = an N-terminal L-phenylalanyl-L-alpha-aminoacyl-[protein] + tRNA(Phe). Functions in the N-end rule pathway of protein degradation where it conjugates Leu, Phe and, less efficiently, Met from aminoacyl-tRNAs to the N-termini of proteins containing an N-terminal arginine or lysine. The chain is Leucyl/phenylalanyl-tRNA--protein transferase from Sinorhizobium fredii (strain NBRC 101917 / NGR234).